The following is a 718-amino-acid chain: Ribosomal RNA large subunit methyltransferase K/L (718 aa).

Residues 43 to 154 (TQYRILLWSR…QDELVVSLDL (112 aa)) form the THUMP domain.

It belongs to the methyltransferase superfamily. RlmKL family.

Its subcellular location is the cytoplasm. It carries out the reaction guanosine(2445) in 23S rRNA + S-adenosyl-L-methionine = N(2)-methylguanosine(2445) in 23S rRNA + S-adenosyl-L-homocysteine + H(+). The catalysed reaction is guanosine(2069) in 23S rRNA + S-adenosyl-L-methionine = N(2)-methylguanosine(2069) in 23S rRNA + S-adenosyl-L-homocysteine + H(+). Functionally, specifically methylates the guanine in position 2445 (m2G2445) and the guanine in position 2069 (m7G2069) of 23S rRNA. The polypeptide is Ribosomal RNA large subunit methyltransferase K/L (Histophilus somni (strain 2336) (Haemophilus somnus)).